The primary structure comprises 328 residues: LOB domain-containing protein 27 (328 aa).

One can recognise an LOB domain in the interval 35 to 136 (GACAACKYQR…EELKAVNSQL (102 aa)).

This sequence belongs to the LOB domain-containing protein family.

The chain is LOB domain-containing protein 27 (LBD27) from Arabidopsis thaliana (Mouse-ear cress).